Reading from the N-terminus, the 636-residue chain is Basic helix-loop-helix ARNT-like protein 2 (636 aa).

The disordered stretch occupies residues Val25 to Ser62. The segment at Thr46 to Lys258 is interaction with PER2. The Nuclear localization signal motif lies at Pro49–Gly54. A bHLH domain is found at Ala107–Leu160. Residues Leu177–Leu187 carry the Nuclear export signal 1 motif. The PAS 1 domain occupies Gln178 to Pro250. Lys287 is covalently cross-linked (Glycyl lysine isopeptide (Lys-Gly) (interchain with G-Cter in SUMO2 and SUMO3)). Lys294 participates in a covalent cross-link: Glycyl lysine isopeptide (Lys-Gly) (interchain with G-Cter in SUMO2). The PAS 2 domain occupies Val357–Lys427. The Nuclear export signal 2 motif lies at Leu392–Leu400. The PAC domain occupies Thr432–His475.

In terms of assembly, component of the circadian core oscillator, which includes the CRY proteins, CLOCK, or NPAS2, BMAL1 or BMAL2, CSNK1D and/or CSNK1E, TIMELESS and the PER proteins. Interacts directly with CLOCK to form the BMAL2-CLOCK transactivator. Can form heterodimers or homodimers which interact directly with CLOCK to form the transcription activator. Interacts with NPAS2 and HIF1A. Interacts with PER2. In terms of tissue distribution, expressed in fetal brain. Highly expressed in brain and placenta. Lower levels in heart, liver, thymus, kidney and lung. Located to endothelial cells and neuronal cells of the suprachiasmatic nucleus (SCN). Also detected in endothelial cells of the heart, lung and kidney. In the brain, specifically expressed in the thalamus, hippocampus and amygdala.

The protein localises to the nucleus. Transcriptional activator which forms a core component of the circadian clock. The circadian clock, an internal time-keeping system, regulates various physiological processes through the generation of approximately 24 hour circadian rhythms in gene expression, which are translated into rhythms in metabolism and behavior. It is derived from the Latin roots 'circa' (about) and 'diem' (day) and acts as an important regulator of a wide array of physiological functions including metabolism, sleep, body temperature, blood pressure, endocrine, immune, cardiovascular, and renal function. Consists of two major components: the central clock, residing in the suprachiasmatic nucleus (SCN) of the brain, and the peripheral clocks that are present in nearly every tissue and organ system. Both the central and peripheral clocks can be reset by environmental cues, also known as Zeitgebers (German for 'timegivers'). The predominant Zeitgeber for the central clock is light, which is sensed by retina and signals directly to the SCN. The central clock entrains the peripheral clocks through neuronal and hormonal signals, body temperature and feeding-related cues, aligning all clocks with the external light/dark cycle. Circadian rhythms allow an organism to achieve temporal homeostasis with its environment at the molecular level by regulating gene expression to create a peak of protein expression once every 24 hours to control when a particular physiological process is most active with respect to the solar day. Transcription and translation of core clock components (CLOCK, NPAS2, BMAL1, BMAL2, PER1, PER2, PER3, CRY1 and CRY2) plays a critical role in rhythm generation, whereas delays imposed by post-translational modifications (PTMs) are important for determining the period (tau) of the rhythms (tau refers to the period of a rhythm and is the length, in time, of one complete cycle). A diurnal rhythm is synchronized with the day/night cycle, while the ultradian and infradian rhythms have a period shorter and longer than 24 hours, respectively. Disruptions in the circadian rhythms contribute to the pathology of cardiovascular diseases, cancer, metabolic syndromes and aging. A transcription/translation feedback loop (TTFL) forms the core of the molecular circadian clock mechanism. Transcription factors, CLOCK or NPAS2 and BMAL1 or BMAL2, form the positive limb of the feedback loop, act in the form of a heterodimer and activate the transcription of core clock genes and clock-controlled genes (involved in key metabolic processes), harboring E-box elements (5'-CACGTG-3') within their promoters. The core clock genes: PER1/2/3 and CRY1/2 which are transcriptional repressors form the negative limb of the feedback loop and interact with the CLOCK|NPAS2-BMAL1|BMAL2 heterodimer inhibiting its activity and thereby negatively regulating their own expression. This heterodimer also activates nuclear receptors NR1D1/2 and RORA/B/G, which form a second feedback loop and which activate and repress BMAL1 transcription, respectively. The CLOCK-BMAL2 heterodimer activates the transcription of SERPINE1/PAI1 and BHLHE40/DEC1. The chain is Basic helix-loop-helix ARNT-like protein 2 from Homo sapiens (Human).